Here is a 213-residue protein sequence, read N- to C-terminus: Probable transaldolase (213 aa).

Residue Lys-83 is the Schiff-base intermediate with substrate of the active site.

It belongs to the transaldolase family. Type 3B subfamily.

It is found in the cytoplasm. It catalyses the reaction D-sedoheptulose 7-phosphate + D-glyceraldehyde 3-phosphate = D-erythrose 4-phosphate + beta-D-fructose 6-phosphate. The protein operates within carbohydrate degradation; pentose phosphate pathway; D-glyceraldehyde 3-phosphate and beta-D-fructose 6-phosphate from D-ribose 5-phosphate and D-xylulose 5-phosphate (non-oxidative stage): step 2/3. Functionally, transaldolase is important for the balance of metabolites in the pentose-phosphate pathway. This Desulfitobacterium hafniense (strain DSM 10664 / DCB-2) protein is Probable transaldolase.